The following is a 257-amino-acid chain: Deoxyribose-phosphate aldolase (257 aa).

The Proton donor/acceptor role is filled by Asp102. Catalysis depends on Lys166, which acts as the Schiff-base intermediate with acetaldehyde. Lys198 serves as the catalytic Proton donor/acceptor.

Belongs to the DeoC/FbaB aldolase family. DeoC type 2 subfamily.

Its subcellular location is the cytoplasm. It carries out the reaction 2-deoxy-D-ribose 5-phosphate = D-glyceraldehyde 3-phosphate + acetaldehyde. Its pathway is carbohydrate degradation; 2-deoxy-D-ribose 1-phosphate degradation; D-glyceraldehyde 3-phosphate and acetaldehyde from 2-deoxy-alpha-D-ribose 1-phosphate: step 2/2. Its function is as follows. Catalyzes a reversible aldol reaction between acetaldehyde and D-glyceraldehyde 3-phosphate to generate 2-deoxy-D-ribose 5-phosphate. The chain is Deoxyribose-phosphate aldolase from Shewanella woodyi (strain ATCC 51908 / MS32).